A 965-amino-acid polypeptide reads, in one-letter code: Collagenase ColQ1 (965 aa).

An N-terminal signal peptide occupies residues 1–30; it reads MNKKSKINKVMLSISTMALSLGALQAPASA. Residues 31–93 constitute a propeptide that is removed on maturation; sequence EEKVPYNVLK…KAAVKQVKES (63 aa). Residues 94-366 are activator domain; sequence YSMADLNKMN…AVEQITTNYN (273 aa). The S1 metalloprotease domain stretch occupies residues 94–765; that stretch reads YSMADLNKMN…VFHGIAKDDG (672 aa). The segment at 376-645 is catalytic subdomain; sequence DLEKIRKEGK…MQQLIDNQDK (270 aa). Histidine 501 contacts Zn(2+). Glutamate 502 is an active-site residue. Positions 505 and 533 each coordinate Zn(2+). A helper subdomain region spans residues 653–765; sequence DDYLAEHAPK…VFHGIAKDDG (113 aa). Residues 769-850 enclose the PKD domain; sequence APTVNINGPY…ESKSETTVTV (82 aa). The disordered stretch occupies residues 842–867; it reads SKSETTVTVKDGSLTESEPNNRPEEA. Residues 845-859 are compositionally biased toward polar residues; that stretch reads ETTVTVKDGSLTESE. The collagen-binding domain stretch occupies residues 853–965; the sequence is GSLTESEPNN…GDGTYKLSVK (113 aa).

It belongs to the peptidase M9B family. Collagenase subfamily. Ca(2+) is required as a cofactor. It depends on Zn(2+) as a cofactor.

The protein localises to the secreted. It catalyses the reaction Digestion of native collagen in the triple helical region at Xaa-|-Gly bonds. With synthetic peptides, a preference is shown for Gly at P3 and P1', Pro and Ala at P2 and P2', and hydroxyproline, Ala or Arg at P3'.. Strongly inhibited by EDTA. Not inhibited by E-64 and PMSF, broad-spectrum cysteine and serine protease inhibitors. Acts as a true collagenase, which is highly active and cleaves natively folded collagen. In vitro, can also cleave gelatin and the synthetic peptide FALGPA (furylacryloyl-Leu-Gly-Pro-Ala). Causes damage on dermal collagen (COL), resulting in gaps in the tissue, which might lead to an accelerated bacterial infiltration and penetration into deeper sites of the host. The chain is Collagenase ColQ1 from Bacillus cereus (strain Q1).